The chain runs to 428 residues: Ribulose bisphosphate carboxylase (428 aa).

Lys151 serves as the catalytic Proton acceptor. Substrate is bound at residue Lys153. Mg(2+) contacts are provided by Lys177, Asp179, and Glu180. The residue at position 177 (Lys177) is an N6-carboxylysine. Residue His270 is the Proton acceptor of the active site. Substrate-binding positions include Arg271, His303, 354-356 (SGG), and 376-379 (QFGG).

It belongs to the RuBisCO large chain family. Type III subfamily. In terms of assembly, homodimer or homodecamer. In contrast to form I RuBisCO, the form III RuBisCO is composed solely of large subunits. Mg(2+) is required as a cofactor.

The enzyme catalyses 2 (2R)-3-phosphoglycerate + 2 H(+) = D-ribulose 1,5-bisphosphate + CO2 + H2O. The catalysed reaction is D-ribulose 1,5-bisphosphate + O2 = 2-phosphoglycolate + (2R)-3-phosphoglycerate + 2 H(+). Its function is as follows. Catalyzes the addition of molecular CO(2) and H(2)O to ribulose 1,5-bisphosphate (RuBP), generating two molecules of 3-phosphoglycerate (3-PGA). Functions in an archaeal AMP degradation pathway, together with AMP phosphorylase and R15P isomerase. In Methanosarcina mazei (strain ATCC BAA-159 / DSM 3647 / Goe1 / Go1 / JCM 11833 / OCM 88) (Methanosarcina frisia), this protein is Ribulose bisphosphate carboxylase.